Consider the following 127-residue polypeptide: Small ribosomal subunit protein uS11 (127 aa).

Belongs to the universal ribosomal protein uS11 family. Part of the 30S ribosomal subunit. Interacts with proteins S7 and S18. Binds to IF-3.

Functionally, located on the platform of the 30S subunit, it bridges several disparate RNA helices of the 16S rRNA. Forms part of the Shine-Dalgarno cleft in the 70S ribosome. This is Small ribosomal subunit protein uS11 from Rickettsia prowazekii (strain Madrid E).